We begin with the raw amino-acid sequence, 341 residues long: Basic membrane protein D (341 aa).

An N-terminal signal peptide occupies residues 1–16; sequence MLKKVYYFLIFLFIVA. C17 is lipidated: N-palmitoyl cysteine. C17 is lipidated: S-diacylglycerol cysteine.

It belongs to the BMP lipoprotein family. Monomer.

The protein resides in the cell inner membrane. Its function is as follows. Binds adenosine and inosine. May be part of an ABC-type nucleoside uptake system involved in the purine salvage pathway. This is Basic membrane protein D from Borreliella burgdorferi (strain JD1) (Borrelia burgdorferi).